The primary structure comprises 98 residues: NADH-ubiquinone oxidoreductase chain 4L (98 aa).

3 consecutive transmembrane segments (helical) span residues 1–21 (MSMV…GLLI), 30–50 (LLCL…TILT), and 61–81 (IILL…LVMI).

Belongs to the complex I subunit 4L family. As to quaternary structure, core subunit of respiratory chain NADH dehydrogenase (Complex I) which is composed of 45 different subunits.

The protein resides in the mitochondrion inner membrane. It carries out the reaction a ubiquinone + NADH + 5 H(+)(in) = a ubiquinol + NAD(+) + 4 H(+)(out). Its function is as follows. Core subunit of the mitochondrial membrane respiratory chain NADH dehydrogenase (Complex I) which catalyzes electron transfer from NADH through the respiratory chain, using ubiquinone as an electron acceptor. Part of the enzyme membrane arm which is embedded in the lipid bilayer and involved in proton translocation. This Gulo gulo (Wolverine) protein is NADH-ubiquinone oxidoreductase chain 4L (MT-ND4L).